The sequence spans 516 residues: ADP-ribosylation factor GTPase-activating protein 3 (516 aa).

The 117-residue stretch at 10–126 (LTIFKRLRSV…IKSLASQATR (117 aa)) folds into the Arf-GAP domain. The C4-type zinc finger occupies 25–48 (CFDCGAKNPSWASITYGVFLCIDC). Positions 170–199 (AEPSSLTSRPAETTLENNEGGQEQGPCVEG) are disordered. Residues 173–190 (SSLTSRPAETTLENNEGG) show a composition bias toward polar residues. A Phosphoserine modification is found at Ser231. The stretch at 243–264 (NEIEKQAQAADKMKEQEDLAKA) forms a coiled coil. Ser270, Ser274, Ser331, and Ser370 each carry phosphoserine. Positions 393 to 417 (TTGYSDRPTARHKPDYEPVENTDEA) are disordered. Phosphoserine occurs at positions 428, 451, 453, 455, 457, and 458.

It localises to the cytoplasm. It is found in the golgi apparatus membrane. Its activity is regulated as follows. GAP activity stimulated by phosphatidylinositol 4,5-bisphosphate (PIP2). Functionally, GTPase-activating protein (GAP) for ADP ribosylation factor 1 (ARF1). Hydrolysis of ARF1-bound GTP may lead to dissociation of coatomer from Golgi-derived membranes to allow fusion with target membranes. In Pongo abelii (Sumatran orangutan), this protein is ADP-ribosylation factor GTPase-activating protein 3.